The following is a 236-amino-acid chain: Peptidase E (236 aa).

Active-site charge relay system residues include serine 122, aspartate 137, and histidine 159.

This sequence belongs to the peptidase S51 family.

It localises to the cytoplasm. The enzyme catalyses Dipeptidase E catalyzes the hydrolysis of dipeptides Asp-|-Xaa. It does not act on peptides with N-terminal Glu, Asn or Gln, nor does it cleave isoaspartyl peptides.. Functionally, hydrolyzes dipeptides containing N-terminal aspartate residues. May play a role in allowing the cell to use peptide aspartate to spare carbon otherwise required for the synthesis of the aspartate family of amino acids. The chain is Peptidase E from Shewanella sp. (strain MR-4).